A 371-amino-acid chain; its full sequence is RNA polymerase sigma factor SigA (371 aa).

The interval 137–207 (LAEANLRLVV…TRAIADQART (71 aa)) is sigma-70 factor domain-2. The Interaction with polymerase core subunit RpoC signature appears at 161-164 (DLIQ). The tract at residues 216 to 292 (ETINKLVREQ…DEVIENPVDY (77 aa)) is sigma-70 factor domain-3. The interval 305–358 (VLDTLTDREENVLRLRFGLDDGKMRTLEDVGKVFDVTRERIRQIEAKALRKLRH) is sigma-70 factor domain-4. The segment at residues 331-350 (LEDVGKVFDVTRERIRQIEA) is a DNA-binding region (H-T-H motif).

It belongs to the sigma-70 factor family. RpoD/SigA subfamily. As to quaternary structure, interacts transiently with the RNA polymerase catalytic core.

The protein resides in the cytoplasm. In terms of biological role, sigma factors are initiation factors that promote the attachment of RNA polymerase to specific initiation sites and are then released. This sigma factor is the primary sigma factor during exponential growth. In Streptococcus mutans serotype c (strain ATCC 700610 / UA159), this protein is RNA polymerase sigma factor SigA.